Here is a 414-residue protein sequence, read N- to C-terminus: Serine/threonine-protein kinase 32B (414 aa).

Positions 23–283 (FQILRAIGKG…LHDIQSVPYL (261 aa)) constitute a Protein kinase domain. Residues 29-37 (IGKGSFGKV) and Lys-52 each bind ATP. Asp-146 (proton acceptor) is an active-site residue. A disordered region spans residues 374-396 (QGQGSQLLDTDSRGGGQAQSKLQ).

Belongs to the protein kinase superfamily. Ser/Thr protein kinase family. It depends on Mg(2+) as a cofactor.

It carries out the reaction L-seryl-[protein] + ATP = O-phospho-L-seryl-[protein] + ADP + H(+). The enzyme catalyses L-threonyl-[protein] + ATP = O-phospho-L-threonyl-[protein] + ADP + H(+). The protein is Serine/threonine-protein kinase 32B of Homo sapiens (Human).